Consider the following 716-residue polypeptide: DNA ligase (716 aa).

Residues 49-53 (DAAYD), 98-99 (SL), and glutamate 132 each bind NAD(+). Catalysis depends on lysine 134, which acts as the N6-AMP-lysine intermediate. Residues arginine 155, glutamate 192, lysine 308, and lysine 332 each coordinate NAD(+). 4 residues coordinate Zn(2+): cysteine 437, cysteine 439, cysteine 461, and cysteine 467. Residues 638-716 (KRNSPIATKT…EDEWLQLIGE (79 aa)) form the BRCT domain.

This sequence belongs to the NAD-dependent DNA ligase family. LigA subfamily. Mg(2+) is required as a cofactor. Mn(2+) serves as cofactor.

It catalyses the reaction NAD(+) + (deoxyribonucleotide)n-3'-hydroxyl + 5'-phospho-(deoxyribonucleotide)m = (deoxyribonucleotide)n+m + AMP + beta-nicotinamide D-nucleotide.. Its function is as follows. DNA ligase that catalyzes the formation of phosphodiester linkages between 5'-phosphoryl and 3'-hydroxyl groups in double-stranded DNA using NAD as a coenzyme and as the energy source for the reaction. It is essential for DNA replication and repair of damaged DNA. In Bradyrhizobium sp. (strain ORS 278), this protein is DNA ligase.